Reading from the N-terminus, the 360-residue chain is DNA replication and repair protein RecF (360 aa).

30–37 (GNNGSGKT) contributes to the ATP binding site.

This sequence belongs to the RecF family.

It is found in the cytoplasm. Its function is as follows. The RecF protein is involved in DNA metabolism; it is required for DNA replication and normal SOS inducibility. RecF binds preferentially to single-stranded, linear DNA. It also seems to bind ATP. The sequence is that of DNA replication and repair protein RecF from Mannheimia succiniciproducens (strain KCTC 0769BP / MBEL55E).